The chain runs to 267 residues: MVRAAVAGIAGRMGSRIAQLIRETDGIELAGGFEHSGHQAVNREISEIIGGSPTGLKVTSHIAQVLDTVDVVLDFTLAAASLEHLRQASARGKAMVIGSTGFAREQLEEAEKLAGRVPCVISPNMSMGVNVLFKVVGDVARLLGESFDVEIIEAHHRLKKDAPSGTALKLAQVAAGALGRNLEEVGVYARRGLIGERTGNEIGIQTIRGGDIVGEHTVMFAGSGERIEIVHRAQSRDNFARGAIRAALWVVRQPPGLYGMDHVLGMK.

NAD(+) contacts are provided by residues 8–13 (GIAGRM), E34, 98–100 (GST), and 122–125 (SPNM). H155 acts as the Proton donor/acceptor in catalysis. H156 is a binding site for (S)-2,3,4,5-tetrahydrodipicolinate. Catalysis depends on K159, which acts as the Proton donor. 165-166 (GT) provides a ligand contact to (S)-2,3,4,5-tetrahydrodipicolinate.

The protein belongs to the DapB family.

Its subcellular location is the cytoplasm. It carries out the reaction (S)-2,3,4,5-tetrahydrodipicolinate + NAD(+) + H2O = (2S,4S)-4-hydroxy-2,3,4,5-tetrahydrodipicolinate + NADH + H(+). The enzyme catalyses (S)-2,3,4,5-tetrahydrodipicolinate + NADP(+) + H2O = (2S,4S)-4-hydroxy-2,3,4,5-tetrahydrodipicolinate + NADPH + H(+). It functions in the pathway amino-acid biosynthesis; L-lysine biosynthesis via DAP pathway; (S)-tetrahydrodipicolinate from L-aspartate: step 4/4. In terms of biological role, catalyzes the conversion of 4-hydroxy-tetrahydrodipicolinate (HTPA) to tetrahydrodipicolinate. This is 4-hydroxy-tetrahydrodipicolinate reductase from Syntrophobacter fumaroxidans (strain DSM 10017 / MPOB).